A 73-amino-acid chain; its full sequence is DNA-directed RNA polymerase subunit Rpo10 (73 aa).

4 residues coordinate Zn(2+): C7, C10, C44, and C45.

It belongs to the archaeal Rpo10/eukaryotic RPB10 RNA polymerase subunit family. In terms of assembly, part of the RNA polymerase complex. Forms an Rpo3-Rpo10-Rpo11-Rpo12 complex upon coexpression. Requires Zn(2+) as cofactor.

The protein localises to the cytoplasm. It carries out the reaction RNA(n) + a ribonucleoside 5'-triphosphate = RNA(n+1) + diphosphate. In terms of biological role, DNA-dependent RNA polymerase (RNAP) catalyzes the transcription of DNA into RNA using the four ribonucleoside triphosphates as substrates. In Methanocaldococcus jannaschii (strain ATCC 43067 / DSM 2661 / JAL-1 / JCM 10045 / NBRC 100440) (Methanococcus jannaschii), this protein is DNA-directed RNA polymerase subunit Rpo10.